Consider the following 335-residue polypeptide: Acyl-CoA Delta(11) desaturase (335 aa).

3 helical membrane-spanning segments follow: residues 39–59 (LLTF…CFTS), 64–84 (TIIL…AGAH), and 98–118 (LQII…IHWI). The short motif at 84–89 (HRLWAH) is the Histidine box-1 element. The Histidine box-2 signature appears at 121-125 (HRMHH). 2 helical membrane passes run 182-202 (AIPF…MYFW) and 213-235 (TMLR…HLYG). The short motif at 261–265 (HNYHH) is the Histidine box-3 element. A disordered region spans residues 312–335 (MKRTGDGTDVSGQKYSCESSEVLQ). Residues 321-335 (VSGQKYSCESSEVLQ) are compositionally biased toward polar residues.

Belongs to the fatty acid desaturase type 1 family. Fe cation serves as cofactor. As to expression, detected in pheromone gland.

Its subcellular location is the membrane. The catalysed reaction is an 11,12-saturated fatty acyl-CoA + 2 Fe(II)-[cytochrome b5] + O2 + 2 H(+) = an (11Z)-Delta(11)-fatty acyl-CoA + 2 Fe(III)-[cytochrome b5] + 2 H2O. Catalyzes the formation of Delta(11) fatty acyl precursors in the pheromone gland, with a preference for myristic acid. The protein is Acyl-CoA Delta(11) desaturase of Choristoneura rosaceana (Oblique banded leafroller).